We begin with the raw amino-acid sequence, 117 residues long: uncharacterized protein (117 aa).

The protein localises to the cytoplasm. It localises to the nucleus. This is an uncharacterized protein from Schizosaccharomyces pombe (strain 972 / ATCC 24843) (Fission yeast).